Consider the following 137-residue polypeptide: 5-hydroxyisourate hydrolase (137 aa).

Positions M1–A23 are cleaved as a signal peptide. Positions 32, 70, and 134 each coordinate substrate.

It belongs to the transthyretin family. 5-hydroxyisourate hydrolase subfamily. As to quaternary structure, homotetramer.

It localises to the periplasm. The catalysed reaction is 5-hydroxyisourate + H2O = 5-hydroxy-2-oxo-4-ureido-2,5-dihydro-1H-imidazole-5-carboxylate + H(+). Catalyzes the hydrolysis of 5-hydroxyisourate (HIU) to 2-oxo-4-hydroxy-4-carboxy-5-ureidoimidazoline (OHCU). The chain is 5-hydroxyisourate hydrolase (hiuH) from Escherichia coli O157:H7.